Consider the following 350-residue polypeptide: Nicotinate-nucleotide--dimethylbenzimidazole phosphoribosyltransferase (350 aa).

The active-site Proton acceptor is the E317.

The protein belongs to the CobT family.

It catalyses the reaction 5,6-dimethylbenzimidazole + nicotinate beta-D-ribonucleotide = alpha-ribazole 5'-phosphate + nicotinate + H(+). Its pathway is nucleoside biosynthesis; alpha-ribazole biosynthesis; alpha-ribazole from 5,6-dimethylbenzimidazole: step 1/2. Catalyzes the synthesis of alpha-ribazole-5'-phosphate from nicotinate mononucleotide (NAMN) and 5,6-dimethylbenzimidazole (DMB). The protein is Nicotinate-nucleotide--dimethylbenzimidazole phosphoribosyltransferase of Shewanella sp. (strain MR-7).